The sequence spans 188 residues: dITP/XTP pyrophosphatase (188 aa).

7–12 (TGNIGK) is a binding site for substrate. Positions 36 and 65 each coordinate Mg(2+). Aspartate 65 serves as the catalytic Proton acceptor. Substrate-binding positions include serine 66, 141 to 144 (FGYD), lysine 164, and 169 to 170 (HR).

This sequence belongs to the HAM1 NTPase family. Homodimer. The cofactor is Mg(2+).

It catalyses the reaction XTP + H2O = XMP + diphosphate + H(+). It carries out the reaction dITP + H2O = dIMP + diphosphate + H(+). The enzyme catalyses ITP + H2O = IMP + diphosphate + H(+). In terms of biological role, pyrophosphatase that catalyzes the hydrolysis of nucleoside triphosphates to their monophosphate derivatives, with a high preference for the non-canonical purine nucleotides XTP (xanthosine triphosphate), dITP (deoxyinosine triphosphate) and ITP. Seems to function as a house-cleaning enzyme that removes non-canonical purine nucleotides from the nucleotide pool, thus preventing their incorporation into DNA/RNA and avoiding chromosomal lesions. The polypeptide is dITP/XTP pyrophosphatase (Methanopyrus kandleri (strain AV19 / DSM 6324 / JCM 9639 / NBRC 100938)).